The chain runs to 75 residues: Dermaseptin-SP3 (75 aa).

An N-terminal signal peptide occupies residues 1–22; that stretch reads MAFLKKSLFLVLFLGLVSLSMC. A propeptide spanning residues 23 to 45 is cleaved from the precursor; that stretch reads EEEKRENEVEEEQEDDEQSELRR. P72 carries the proline amide modification. The propeptide occupies 74–75; that stretch reads EQ.

This sequence belongs to the frog skin active peptide (FSAP) family. Dermaseptin subfamily. As to expression, expressed by the skin glands.

Its subcellular location is the secreted. The protein resides in the target cell membrane. Antimicrobial peptide with activity against Gram-positive and Gram-negative bacteria and fungi. Has been tested against E.coli (MIC=47.50-128 uM), S.aureus (MIC=189.98-512 uM), K.pneumoniae (MIC&gt;189.98 uM) and C.albicans (MIC&gt;189.98 uM). Probably acts by disturbing membrane functions with its alpha-helical amphipathic structure. May penetrate bacterial membranes, but stay at the mammalian membrane surface. Shows a very weak hemolytic activity. This Agalychnis spurrelli (Gliding leaf frog) protein is Dermaseptin-SP3.